A 434-amino-acid chain; its full sequence is MPTFVDQTKIEVQAGKGGDGMVAFRHEKYVPNGGPAGGDGGRGGSIIFVADSGLRTLMDFRYRRKFKADSGENGRIKSQYGRAAKDLYLKVPVGTTVYDFNTGELIGDLVEKGQELVVAKGGRGGRGNIHFATSVNTAPEIAENGEPGEDRVLRLELKLLADVGLVGFPSVGKSTLLSVTTKAKPKIAAYEFTTLTPNLGMVILPDGRDFSMADLPGLIEGASQGVGLGIQFLRHVERTKVILHLVSMDPNNGREAIEDYHTIKNELKNYETDLSKKRELIVASQMDISGAEEKLAAFKKALKEEGNNEPVYEISSVTHKGVSKLMNDTATLVEEVEKERAEEEPKVVQKTKEYKYKAPQKNEFTVEKVGEHEFVVKGEQLERLVQMTNLDHQDGIMRLARRLKRLGVDDALREKGAVNGDDVAIGKFVFEFVQ.

The region spanning 2 to 160 (PTFVDQTKIE…RVLRLELKLL (159 aa)) is the Obg domain. Residues 161–334 (ADVGLVGFPS…LMNDTATLVE (174 aa)) form the OBG-type G domain. Residues 167 to 174 (GFPSVGKS), 192 to 196 (FTTLT), 214 to 217 (DLPG), 284 to 287 (SQMD), and 315 to 317 (SSV) each bind GTP. Positions 174 and 194 each coordinate Mg(2+). One can recognise an OCT domain in the interval 356-434 (YKAPQKNEFT…IGKFVFEFVQ (79 aa)).

This sequence belongs to the TRAFAC class OBG-HflX-like GTPase superfamily. OBG GTPase family. In terms of assembly, monomer. The cofactor is Mg(2+).

Its subcellular location is the cytoplasm. Functionally, an essential GTPase which binds GTP, GDP and possibly (p)ppGpp with moderate affinity, with high nucleotide exchange rates and a fairly low GTP hydrolysis rate. Plays a role in control of the cell cycle, stress response, ribosome biogenesis and in those bacteria that undergo differentiation, in morphogenesis control. The chain is GTPase Obg from Lactobacillus helveticus (strain DPC 4571).